We begin with the raw amino-acid sequence, 565 residues long: Proline--tRNA ligase (565 aa).

This sequence belongs to the class-II aminoacyl-tRNA synthetase family. ProS type 1 subfamily. In terms of assembly, homodimer.

It localises to the cytoplasm. The enzyme catalyses tRNA(Pro) + L-proline + ATP = L-prolyl-tRNA(Pro) + AMP + diphosphate. Catalyzes the attachment of proline to tRNA(Pro) in a two-step reaction: proline is first activated by ATP to form Pro-AMP and then transferred to the acceptor end of tRNA(Pro). As ProRS can inadvertently accommodate and process non-cognate amino acids such as alanine and cysteine, to avoid such errors it has two additional distinct editing activities against alanine. One activity is designated as 'pretransfer' editing and involves the tRNA(Pro)-independent hydrolysis of activated Ala-AMP. The other activity is designated 'posttransfer' editing and involves deacylation of mischarged Ala-tRNA(Pro). The misacylated Cys-tRNA(Pro) is not edited by ProRS. The polypeptide is Proline--tRNA ligase (Lactobacillus helveticus (strain DPC 4571)).